The following is a 955-amino-acid chain: MSQLLQQLGTDNEFIRRHNGPASSEHQHMLNTIGAETLQQLIEETVPSSIRLPQPMQLPHGLSENAMLAELKQIAQQNTLNTSYIGQGYYNTHTPNVILRNVLENPGWYTAYTPYQPEISQGRLEALLNYQQMVMDLTGLEIANASLLDEATAAAEAMTLCKRGGKSKSNLFFVADDVHPQTLAVIKTRAKFIGFDVVVDHESNLDSHDVFGALLQYPGTTGEVKDLTDLIAQAHTKKTLVIVATDLLASVLLKPVGEMGADIAIGSAQRFGVPMGYGGPHAAFMATREKLKRSMPGRVIGVSIDSKGNQALRMAMQTREQHIRREKATSNICTAQALLANMASFYAVYHGPEGLKTIARRVHHFTAIVAKALQTAGFELEHQHFFDTLTVKTEQQTDILYTKALASSINLRKFDTKLGISFDETTTVSDLVTLLAVFGIDNAECETLSAEVGKDEFAAIPKHCQRTSSFLTHPVFNTYHSETQMLRYLKKLENKDFSLTHGMIPLGSCTMKLNAVAEMLPVTWPEFGGIHPFAPLNQAAGYTTLATSLKSMLCEITGYDEFSLQPNSGASGEYAGLIAIQRYHESRGDAHRNVCLIPSSAHGTNPATASMVSMKVVVVKCDENGNIDMIDLAEKIEKHQENLSSIMITYPSTHGVYEEQVREVCDMVHAAGGQVYLDGANMNAQVGLTSPGFIGSDVSHLNLHKTFCIPHGGGGPGMGPIGVKSHLAPFLPGHTENGVQGMDYAVSAADLGSASILPISWAYIAMMGEMGLTEATKVAILNANYVMERLRPHYPVLYRGTNGRIAHECIIDIRPLKETTGISEEDIAKRLMDFGFHAPTMSFPVAGTLMVEPTESEDLAELDRFCDAMIAIREEMNKVEQGEWPLDNNPLVNAPHTQVDLMSDSWEHPYTREVACFPSSQSKDSKYWPTVNRVDNVYGDRNLICSCPSIENYEE.

At K705 the chain carries N6-(pyridoxal phosphate)lysine.

It belongs to the GcvP family. The glycine cleavage system is composed of four proteins: P, T, L and H. Pyridoxal 5'-phosphate is required as a cofactor.

The enzyme catalyses N(6)-[(R)-lipoyl]-L-lysyl-[glycine-cleavage complex H protein] + glycine + H(+) = N(6)-[(R)-S(8)-aminomethyldihydrolipoyl]-L-lysyl-[glycine-cleavage complex H protein] + CO2. Its function is as follows. The glycine cleavage system catalyzes the degradation of glycine. The P protein binds the alpha-amino group of glycine through its pyridoxal phosphate cofactor; CO(2) is released and the remaining methylamine moiety is then transferred to the lipoamide cofactor of the H protein. This is Glycine dehydrogenase (decarboxylating) from Aliivibrio fischeri (strain ATCC 700601 / ES114) (Vibrio fischeri).